A 272-amino-acid chain; its full sequence is Orotidine 5'-phosphate decarboxylase (272 aa).

Catalysis depends on Lys95, which acts as the Proton donor.

The protein belongs to the OMP decarboxylase family. Type 2 subfamily.

The enzyme catalyses orotidine 5'-phosphate + H(+) = UMP + CO2. It participates in pyrimidine metabolism; UMP biosynthesis via de novo pathway; UMP from orotate: step 2/2. The protein is Orotidine 5'-phosphate decarboxylase of Bordetella avium (strain 197N).